We begin with the raw amino-acid sequence, 362 residues long: Endopolygalacturonase II (362 aa).

Positions 1-20 (MHSFASLLRYGLAAGATLAS) are cleaved as a signal peptide. Residues 21 to 27 (ASPIEAR) constitute a propeptide that is removed on maturation. An intrachain disulfide couples C30 to C45. Residues 156–186 (SDDITLTDITINNADGDSLGGHNTDAFDVGN) form a PbH1 1 repeat. The active-site Proton donor is the D201. Cysteines 203 and 219 form a disulfide. PbH1 repeat units lie at residues 209–229 (GENI…SIGS), 238–259 (VKNV…RIKT), 267–289 (VSEI…VIQQ), and 301–322 (TNGV…DSKA). H223 is a catalytic residue. A glycan (N-linked (GlcNAc...) asparagine) is linked at N240. Disulfide bonds link C329–C334 and C353–C362.

The protein belongs to the glycosyl hydrolase 28 family.

It is found in the secreted. The catalysed reaction is (1,4-alpha-D-galacturonosyl)n+m + H2O = (1,4-alpha-D-galacturonosyl)n + (1,4-alpha-D-galacturonosyl)m.. Its function is as follows. Involved in maceration and soft-rotting of plant tissue. Hydrolyzes the 1,4-alpha glycosidic bonds of de-esterified pectate in the smooth region of the plant cell wall. The protein is Endopolygalacturonase II (pgaII) of Aspergillus awamori (Black koji mold).